The chain runs to 207 residues: Uracil phosphoribosyltransferase (207 aa).

5-phospho-alpha-D-ribose 1-diphosphate is bound by residues R77, R102, and 129–137 (DPMLATGGS). Uracil-binding positions include I192 and 197–199 (GDA). D198 is a 5-phospho-alpha-D-ribose 1-diphosphate binding site.

Belongs to the UPRTase family. The cofactor is Mg(2+).

The catalysed reaction is UMP + diphosphate = 5-phospho-alpha-D-ribose 1-diphosphate + uracil. It functions in the pathway pyrimidine metabolism; UMP biosynthesis via salvage pathway; UMP from uracil: step 1/1. With respect to regulation, allosterically activated by GTP. Its function is as follows. Catalyzes the conversion of uracil and 5-phospho-alpha-D-ribose 1-diphosphate (PRPP) to UMP and diphosphate. In Mycoplasma capricolum subsp. capricolum (strain California kid / ATCC 27343 / NCTC 10154), this protein is Uracil phosphoribosyltransferase.